A 250-amino-acid chain; its full sequence is 5-oxoprolinase subunit A (250 aa).

Belongs to the LamB/PxpA family. Forms a complex composed of PxpA, PxpB and PxpC.

The enzyme catalyses 5-oxo-L-proline + ATP + 2 H2O = L-glutamate + ADP + phosphate + H(+). Its function is as follows. Catalyzes the cleavage of 5-oxoproline to form L-glutamate coupled to the hydrolysis of ATP to ADP and inorganic phosphate. This Staphylococcus aureus (strain NCTC 8325 / PS 47) protein is 5-oxoprolinase subunit A.